Reading from the N-terminus, the 89-residue chain is Acylphosphatase (89 aa).

The region spanning 3 to 89 (RMTAWVHGFV…RGDLTGFVER (87 aa)) is the Acylphosphatase-like domain. Active-site residues include arginine 18 and asparagine 36.

The protein belongs to the acylphosphatase family.

The enzyme catalyses an acyl phosphate + H2O = a carboxylate + phosphate + H(+). The chain is Acylphosphatase (acyP) from Rhodococcus jostii (strain RHA1).